A 242-amino-acid polypeptide reads, in one-letter code: MSMKILPAIDIKDGQAVRLFKGDFSQKTVVNPDVLEQARVFKEAGVTMIHVVDLEGALEGRAANRDLIAQIKAETGLAIQVGGGIRSLEQIEDYLAVGIDRVIIGSMAVKNPEFVEAALERFGSGKIVIGIDAKEGLVATEGWLETSNQDYISLALAMEKIGVRLFVYTDVDRDGTLTGPNIQHYQKLLASLKHAQVIASGGIQSADDLEEMKKLGLAGAIVGKAYYSGRISLEQIKEAERG.

The active-site Proton acceptor is the Asp10. Asp132 serves as the catalytic Proton donor.

The protein belongs to the HisA/HisF family.

Its subcellular location is the cytoplasm. The catalysed reaction is 1-(5-phospho-beta-D-ribosyl)-5-[(5-phospho-beta-D-ribosylamino)methylideneamino]imidazole-4-carboxamide = 5-[(5-phospho-1-deoxy-D-ribulos-1-ylimino)methylamino]-1-(5-phospho-beta-D-ribosyl)imidazole-4-carboxamide. The protein operates within amino-acid biosynthesis; L-histidine biosynthesis; L-histidine from 5-phospho-alpha-D-ribose 1-diphosphate: step 4/9. This chain is 1-(5-phosphoribosyl)-5-[(5-phosphoribosylamino)methylideneamino] imidazole-4-carboxamide isomerase, found in Streptococcus sanguinis (strain SK36).